The sequence spans 82 residues: Sec-independent protein translocase protein TatA (82 aa).

The chain crosses the membrane as a helical span at residues 1 to 21 (MGGISIWQLLIIAVIVVLLFG).

This sequence belongs to the TatA/E family. As to quaternary structure, the Tat system comprises two distinct complexes: a TatABC complex, containing multiple copies of TatA, TatB and TatC subunits, and a separate TatA complex, containing only TatA subunits. Substrates initially bind to the TatABC complex, which probably triggers association of the separate TatA complex to form the active translocon.

It localises to the cell inner membrane. Functionally, part of the twin-arginine translocation (Tat) system that transports large folded proteins containing a characteristic twin-arginine motif in their signal peptide across membranes. TatA could form the protein-conducting channel of the Tat system. This chain is Sec-independent protein translocase protein TatA, found in Vibrio cholerae serotype O1 (strain ATCC 39315 / El Tor Inaba N16961).